Consider the following 180-residue polypeptide: Progesterone receptor (180 aa).

The NR C4-type zinc finger occupies 1–11; sequence KNCPACRLRKC. The nuclear receptor DNA-binding region spans 1-16; that stretch reads KNCPACRLRKCCQAGM. Ser60 carries the phosphoserine modification. One can recognise an NR LBD domain in the interval 63–180; it reads QEIQLFPPLI…QRMKESSFYS (118 aa). Residues 71 to 180 are AF2; mediates transcriptional activation; that stretch reads LINLLLSIEP…QRMKESSFYS (110 aa). A progesterone-binding site is contributed by Arg150.

This sequence belongs to the nuclear hormone receptor family. NR3 subfamily. As to quaternary structure, interacts with SMARD1 and UNC45A. Interacts with CUEDC2; the interaction promotes ubiquitination, decreases sumoylation, and represses transcriptional activity. Interacts with PIAS3; the interaction promotes sumoylation of PR in a hormone-dependent manner, inhibits DNA-binding, and alters nuclear export. Interacts with SP1; the interaction requires ligand-induced phosphorylation by ERK1/2-MAPK. Interacts with PRMT2. Interacts with NCOA2 and NCOA1. Interacts with KLF9. Interacts with GTF2B. Post-translationally, phosphorylated on multiple serine sites. Several of these sites are hormone-dependent. Sumoylation is hormone-dependent and represses transcriptional activity. Sumoylation on all three sites is enhanced by PIAS3. Desumoylated by SENP1. Sumoylation is repressed by ubiquitination and modulated by phosphorylation. In terms of processing, ubiquitination is hormone-dependent and represses sumoylation. Post-translationally, palmitoylated by ZDHHC7 and ZDHHC21. Palmitoylation is required for plasma membrane targeting and for rapid intracellular signaling via ERK and AKT kinases and cAMP generation.

It localises to the nucleus. It is found in the cytoplasm. In terms of biological role, the steroid hormones and their receptors are involved in the regulation of eukaryotic gene expression and affect cellular proliferation and differentiation in target tissues. Transcriptional activator of several progesteron-dependent promoters in a variety of cell types. Involved in activation of SRC-dependent MAPK signaling on hormone stimulation. The polypeptide is Progesterone receptor (PGR) (Notamacropus eugenii (Tammar wallaby)).